Here is a 62-residue protein sequence, read N- to C-terminus: Large ribosomal subunit protein eL37 (62 aa).

Zn(2+) contacts are provided by cysteine 20, cysteine 23, cysteine 35, and cysteine 38. The segment at 20 to 38 (CRRCGRRAYHVRKGYCAAC) adopts a C4-type zinc-finger fold.

Belongs to the eukaryotic ribosomal protein eL37 family. Zn(2+) serves as cofactor.

Functionally, binds to the 23S rRNA. The polypeptide is Large ribosomal subunit protein eL37 (Methanopyrus kandleri (strain AV19 / DSM 6324 / JCM 9639 / NBRC 100938)).